A 194-amino-acid polypeptide reads, in one-letter code: Holliday junction branch migration complex subunit RuvA (194 aa).

The tract at residues 1 to 64 (MIGRLRGILA…EDSVALYGFL (64 aa)) is domain I. The interval 65 to 140 (REGERRLFRD…RAADFSSGAP (76 aa)) is domain II. Positions 140–144 (PITGQ) are flexible linker. Residues 145-194 (LGPDAVSEATVALQQLGYKPAEAARMARDAGAEGDEVATVIRKALQAALR) form a domain III region.

It belongs to the RuvA family. Homotetramer. Forms an RuvA(8)-RuvB(12)-Holliday junction (HJ) complex. HJ DNA is sandwiched between 2 RuvA tetramers; dsDNA enters through RuvA and exits via RuvB. An RuvB hexamer assembles on each DNA strand where it exits the tetramer. Each RuvB hexamer is contacted by two RuvA subunits (via domain III) on 2 adjacent RuvB subunits; this complex drives branch migration. In the full resolvosome a probable DNA-RuvA(4)-RuvB(12)-RuvC(2) complex forms which resolves the HJ.

It is found in the cytoplasm. The RuvA-RuvB-RuvC complex processes Holliday junction (HJ) DNA during genetic recombination and DNA repair, while the RuvA-RuvB complex plays an important role in the rescue of blocked DNA replication forks via replication fork reversal (RFR). RuvA specifically binds to HJ cruciform DNA, conferring on it an open structure. The RuvB hexamer acts as an ATP-dependent pump, pulling dsDNA into and through the RuvAB complex. HJ branch migration allows RuvC to scan DNA until it finds its consensus sequence, where it cleaves and resolves the cruciform DNA. The chain is Holliday junction branch migration complex subunit RuvA from Xanthomonas euvesicatoria pv. vesicatoria (strain 85-10) (Xanthomonas campestris pv. vesicatoria).